The following is a 792-amino-acid chain: Phosphatidylinositol 4-phosphate 5-kinase type-1 sktl (792 aa).

The segment covering 1 to 21 (MDTRVELELEPVGKQDRLKDQ) has biased composition (basic and acidic residues). Disordered regions lie at residues 1–74 (MDTR…QPGT), 105–139 (TQTP…KKLG), 423–446 (AKLQ…DAPE), 577–612 (TPTF…PTNA), and 640–714 (AAST…TDLS). Composition is skewed to polar residues over residues 52-62 (QTASPDQEATP) and 105-131 (TQTP…STTG). Positions 155–573 (QSKQIMGSIQ…RFQDAMGKQV (419 aa)) constitute a PIPK domain. A compositionally biased stretch (low complexity) spans 642 to 658 (STSSLQQQRSSNQSNNN). Polar residues predominate over residues 678–702 (EPSSTYHTQYSYDSSGRTGSALTSD).

As to quaternary structure, interacts with ash2 (via B30.2/SPRY domain); the interaction is direct and seems to be specific for ash2 isoform B.

It is found in the cytoplasm. Its subcellular location is the cell cortex. The protein resides in the nucleus. The protein localises to the chromosome. It localises to the apical cell membrane. It is found in the cell projection. Its subcellular location is the cilium. The protein resides in the flagellum membrane. The enzyme catalyses a 1,2-diacyl-sn-glycero-3-phospho-(1D-myo-inositol 4-phosphate) + ATP = a 1,2-diacyl-sn-glycero-3-phospho-(1D-myo-inositol-4,5-bisphosphate) + ADP + H(+). Functionally, catalyzes the phosphorylation of phosphatidylinositol 4-phosphate (PtdIns[4]P) to form phosphatidylinositol 4,5-bisphosphate (PtdIns[4,5]P(2)), a lipid second messenger that regulates several cellular processes such as signal transduction, vesicle trafficking, actin cytoskeleton dynamics, cell adhesion, and cell motility. PtdIns[4,5]P(2) can directly act as a second messenger or can be utilized as a precursor to generate other second messengers: inositol 1,4,5-trisphosphate (IP3), diacylglycerol (DAG) or phosphatidylinositol-3,4,5-trisphosphate (PtdIns[3,4,5]P(3)). Required for germline development during oogenesis. Sktl is the major phosphatidylinositol 4-phosphate 5-kinase responsible for enrichment of PtdIns[4,5]P(2) in the apical plasma membrane of the oocyte and follicular epithelium cells of the egg chamber during oogenesis. Involved in nuclear anchoring and microtubule organization required for targeted mRNA transport during maintenance of oocyte polarity. The PtdIns[4,5]P(2) produced by sktl is required for maintenance of cellular polarity, prevention of the epithelial-mesenchymal transition process, maintenance of adherens junctions and regulation of apical constriction, probably by affecting polarized cortical recruitment of PAR proteins and their effectors, including baz/bazooka, aPKC, par-1 and l(2)gl. Involved in actin cytoskeleton organization probably through PtdIns[4,5]P(2)-mediated regulation of Moe/Moesin phosphorylation. Involved in PtdIns[4,5]P(2)-mediated apical recruitment of the formin dia/diaphanous in tubular epithelial cells. Involved in anterodorsal cell morphogenesis and eggshell dorsal appendage formation, probably through regulation of apical constriction by PtdIns[4,5]P(2) during tubulogenesis. Required for cell viability or proliferation during wing and eye imaginal disk development. May be involved in cytoskeletal regulation during sensory bristle development. Together with mys/integrin beta localizes to the trailing edge of larval epidermal cells in a JNK signaling-dependent manner during wound healing and is required for setting up cell polarity and re-epithelialization. Required for polarization of elongating spermatid cysts possibly by generation of PtdIns[4,5]P(2) involved in mediating membrane association and orientation of the nucleus-basal body pair. Probably involved in PtdIns[4,5]P(2)-mediated recruitment of exocyst proteins that may mediate membrane addition during spermatid elongation. Involved in maintenance of specialised cell contacts known as slit diaphragms required for nephrocyte morphogenesis and function. Regulates nephrocyte endocytosis, possibly through PtdIns[4,5]P(2)-mediated recruitment of effector proteins. Not required for nervous system development or neurotransmitter release at the neuromuscular junction. Together with ash2 probably plays a role in maintenance of transcriptionally active chromatin through down-regulation of histone H1 hyperphosphorylation. The protein is Phosphatidylinositol 4-phosphate 5-kinase type-1 sktl of Drosophila melanogaster (Fruit fly).